A 209-amino-acid polypeptide reads, in one-letter code: Probable glutathione peroxidase 8-A (209 aa).

The helical transmembrane segment at 18–40 (VSVVFLSMLLCTGILCVLQLGFL) threads the bilayer. Cysteine 79 is an active-site residue.

It belongs to the glutathione peroxidase family.

It localises to the membrane. It catalyses the reaction 2 glutathione + H2O2 = glutathione disulfide + 2 H2O. This Xenopus laevis (African clawed frog) protein is Probable glutathione peroxidase 8-A (gpx8-a).